The following is a 137-amino-acid chain: Ribosome-binding factor A (137 aa).

It belongs to the RbfA family. As to quaternary structure, monomer. Binds 30S ribosomal subunits, but not 50S ribosomal subunits or 70S ribosomes.

It is found in the cytoplasm. In terms of biological role, one of several proteins that assist in the late maturation steps of the functional core of the 30S ribosomal subunit. Associates with free 30S ribosomal subunits (but not with 30S subunits that are part of 70S ribosomes or polysomes). Required for efficient processing of 16S rRNA. May interact with the 5'-terminal helix region of 16S rRNA. This is Ribosome-binding factor A from Nitrobacter hamburgensis (strain DSM 10229 / NCIMB 13809 / X14).